We begin with the raw amino-acid sequence, 342 residues long: L-threonine 3-dehydrogenase (342 aa).

Residue Cys38 coordinates Zn(2+). Residues Thr40 and His43 each act as charge relay system in the active site. Residues His63, Glu64, Cys93, Cys96, Cys99, and Cys107 each contribute to the Zn(2+) site. Residues Ile175, Asp195, Arg200, 262-264 (LGI), and 286-287 (IY) contribute to the NAD(+) site.

The protein belongs to the zinc-containing alcohol dehydrogenase family. Homotetramer. Requires Zn(2+) as cofactor.

The protein localises to the cytoplasm. The catalysed reaction is L-threonine + NAD(+) = (2S)-2-amino-3-oxobutanoate + NADH + H(+). The protein operates within amino-acid degradation; L-threonine degradation via oxydo-reductase pathway; glycine from L-threonine: step 1/2. Catalyzes the NAD(+)-dependent oxidation of L-threonine to 2-amino-3-ketobutyrate. In Burkholderia multivorans (strain ATCC 17616 / 249), this protein is L-threonine 3-dehydrogenase.